The chain runs to 283 residues: MPGFFCDCWPSLEIRALLYAMGCIQSIGGKARVFREGITVIDVKASIDPVPTSIDESSSVVLRYRTPHFRASAQVVMPPIPKKETWVVGWIQACSHMEFYNQYGEQGMSSWELPDLQEGKIQAISDSDGVNYPWYGNTTETCTIVGPTKRDSKFIISMNDNFYPSVTWAVPVSESNVAKLTNIYRDQSFTTWLVATNTSTNDMIILQTLHWRMQLSIEVNPNRPLGQRARLREPIAQDQPKILSKNEPIPPSALVKPNANDAQVLMWRPKYGQPLVVIPPKHR.

This sequence belongs to the FAM78 family.

In Homo sapiens (Human), this protein is Protein FAM78A (FAM78A).